The following is a 1453-amino-acid chain: DNA-directed RNA polymerase IV subunit 1 (1453 aa).

Zn(2+) contacts are provided by Cys-56, Cys-59, Cys-67, His-70, Cys-97, Cys-100, and Cys-121. 3 residues coordinate Mg(2+): Asp-447, Asp-449, and Asp-451. Positions 806 to 818 are bridging helix; it reads PLESFVHSVTSRD.

Belongs to the RNA polymerase beta' chain family. As to quaternary structure, component of the RNA polymerase IV complex. Interacts with NRPD2, NRPD3, NRPD3B, NRPD4, NRPD5, NRPD5B, NRPD6A, NRPD7, NRPD7B, NRPD9A, NRPD9B, NRPD10, NRPD11, NRPD12, RDR2, RDM4, CLSY1, CLSY2, CLSY3, CLSY4 and SHH1. Mostly expressed in flowers, and, to a lower extent, in leaves.

Its subcellular location is the nucleus. The catalysed reaction is RNA(n) + a ribonucleoside 5'-triphosphate = RNA(n+1) + diphosphate. DNA-dependent RNA polymerase catalyzes the transcription of DNA into RNA using the four ribonucleoside triphosphates as substrates. Largest and catalytic component of RNA polymerase IV which mediates 24-nt short-interfering RNAs (siRNA) accumulation. Implicated in siRNA-directed heterochromatin formation through the action of DCL3 and AGO4, and subsequent DNA methylation-dependent silencing of targeted sequences. Essential component of a self-reinforcing loop coupling de novo DNA methylation to siRNA production. Required for intercellular but not intracellular RNA interference (RNAi) leading to systemic post-transcriptional gene silencing. Involved in the maintenance of post-transcriptional RNA silencing. The sequence is that of DNA-directed RNA polymerase IV subunit 1 (NRPD1) from Arabidopsis thaliana (Mouse-ear cress).